The sequence spans 377 residues: Apelin receptor (377 aa).

Topologically, residues 1 to 28 (MEDDGYNYYGADNQSECDYADWKPSGAL) are extracellular. An N-linked (GlcNAc...) asparagine glycan is attached at asparagine 13. 2 cysteine pairs are disulfide-bonded: cysteine 17–cysteine 279 and cysteine 100–cysteine 179. The helical transmembrane segment at 29–52 (IPAIYMLVFLLGTTGNGLVLWTVF) threads the bilayer. Topologically, residues 53-62 (RTSREKRRSA) are cytoplasmic. The chain crosses the membrane as a helical span at residues 63–84 (DIFIASLAVADLTFVVTLPLWA). The Extracellular segment spans residues 85–97 (TYTYREFDWPFGT). Residues 98-123 (FSCKLSSYLIFVNMYASVFCLTGLSF) traverse the membrane as a helical segment. Residues 124–144 (DRYLAIVRPVANARLRLRVSG) lie on the Cytoplasmic side of the membrane. A helical membrane pass occupies residues 145–162 (AVATAVLWVLAALLAVPV). Topologically, residues 163-196 (MVFRSTDASENGTKIQCYMDYSMVATSNSEWAWE) are extracellular. The N-linked (GlcNAc...) asparagine glycan is linked to asparagine 173. A helical membrane pass occupies residues 197 to 221 (VGLGVSSTAVGFVVPFTIMLTCYFF). The Cytoplasmic portion of the chain corresponds to 222–244 (IAQTIAGHFRKERIEGLRKRRRL). A helical transmembrane segment spans residues 245–268 (LSIIVVLVVTFALCWMPYHLVKTL). Residues 269–287 (YMLGSLLHWPCDFDIFLMN) lie on the Extracellular side of the membrane. A helical transmembrane segment spans residues 288-310 (VFPYCTCISYVNSCLNPFLYAFF). Residues 311–377 (DPRFRQACTS…IPYSQETLVD (67 aa)) lie on the Cytoplasmic side of the membrane. A disordered region spans residues 334–377 (HSSSAEKSASYSSGHSQGPGPNMGKGGEQMHEKSIPYSQETLVD). Over residues 335–349 (SSSAEKSASYSSGHS) the composition is skewed to low complexity.

The protein belongs to the G-protein coupled receptor 1 family. Homodimer; dimerization inhibits APLNR-mediated G protein and beta-arrestin signaling pathways compared to monomeric APLNR. Expressed in coronary endothelial cells (at protein level). Expressed in the embryo, allantoic and endothelial precursor cells of the yolk sac at 8 days post-coitum (dpc). Expressed in the secondary heart field and somite at 8.25 dpc. Expressed in fetal allantoic endothelial cells at 9 dpc. Expressed in the allantoid and the invading fetal vasculature of the placenta at 9.5 dpc. Expressed in endothelial cells adjacent to syncytiotrophoblast cells at 10.5 dpc. Expressed weakly in the embryonic heart at 11.5 dpc. Expressed in the adult heart. Expressed in endothelial cells and cardiomyocytes and weakly expressed in fibroblasts.

It localises to the cell membrane. In terms of biological role, g protein-coupled receptor for peptide hormones apelin (APLN) and apelin receptor early endogenous ligand (APELA), that plays a role in the regulation of normal cardiovascular function and fluid homeostasis. When acting as apelin receptor, activates both G(i) protein pathway that inhibits adenylate cyclase activity, and the beta-arrestin pathway leading to internalization of the receptor. APLNR/APJ receptor is also activated by mechanical strech in a G-protein-independent fashion to induce beta-arrestin signaling leading to cardiac hypertrophy. However, the presence of apelin ligand blunts cardiac hypertrophic induction from APLNR/APJ on response to pathological stimuli. Plays a key role in early development such as gastrulation, blood vessels formation and heart morphogenesis by acting as a receptor for APELA hormone. May promote angioblast migration toward the embryonic midline, i.e. the position of the future vessel formation, during vasculogenesis. Promotes sinus venosus (SV)-derived endothelial cells migration into the developing heart to promote coronary blood vessel development. Also plays a role in various processes in adults such as regulation of blood vessel formation, blood pressure and heart contractility and protection from cardiac hypertrophy and heart failure. This is Apelin receptor from Mus musculus (Mouse).